A 339-amino-acid polypeptide reads, in one-letter code: Protein-glutamate methylesterase/protein-glutamine glutaminase (339 aa).

One can recognise a Response regulatory domain in the interval 2 to 119 (RIGVVNDMPM…EGNASSQSAR (118 aa)). Asp-53 bears the 4-aspartylphosphate mark. The CheB-type methylesterase domain occupies 149-338 (PTPRRLIAIG…SRIIEACERS (190 aa)). Residues Ser-160, His-187, and Asp-280 contribute to the active site.

The protein belongs to the CheB family. In terms of processing, phosphorylated by CheA. Phosphorylation of the N-terminal regulatory domain activates the methylesterase activity.

Its subcellular location is the cytoplasm. The enzyme catalyses [protein]-L-glutamate 5-O-methyl ester + H2O = L-glutamyl-[protein] + methanol + H(+). It catalyses the reaction L-glutaminyl-[protein] + H2O = L-glutamyl-[protein] + NH4(+). In terms of biological role, involved in chemotaxis. Part of a chemotaxis signal transduction system that modulates chemotaxis in response to various stimuli. Catalyzes the demethylation of specific methylglutamate residues introduced into the chemoreceptors (methyl-accepting chemotaxis proteins or MCP) by CheR. Also mediates the irreversible deamidation of specific glutamine residues to glutamic acid. The chain is Protein-glutamate methylesterase/protein-glutamine glutaminase from Mesorhizobium japonicum (strain LMG 29417 / CECT 9101 / MAFF 303099) (Mesorhizobium loti (strain MAFF 303099)).